The following is a 181-amino-acid chain: SecB-like chaperone MT2006 (181 aa).

It belongs to the SecB-like family. In terms of assembly, homotetramer, interacts with antitoxin HigA1.

Chaperone component of an atypical, type II toxin-antitoxin chaperone (TAC) module, probably required for antitoxin HigA1 to neutralize its cognate toxin HigB1. This is SecB-like chaperone MT2006 (secBL) from Mycobacterium tuberculosis (strain CDC 1551 / Oshkosh).